The primary structure comprises 116 residues: Transcription elongation factor SPT4 homolog 2 (116 aa).

A C4-type zinc finger spans residues 19-39 (CLRCRLVKTYDQFRDAGCENC).

It belongs to the SPT4 family.

Its subcellular location is the nucleus. May regulate transcription elongation by RNA polymerase II. May enhance transcriptional pausing at sites proximal to the promoter, which may in turn facilitate the assembly of an elongation competent RNA polymerase II complex. This is Transcription elongation factor SPT4 homolog 2 from Arabidopsis thaliana (Mouse-ear cress).